Consider the following 109-residue polypeptide: Cell division protein ZapA (109 aa).

The stretch at 21–99 forms a coiled coil; that stretch reads PEQRDALNQA…IEQALLEQGR (79 aa).

This sequence belongs to the ZapA family. Type 1 subfamily. Homodimer. Interacts with FtsZ.

It is found in the cytoplasm. Functionally, activator of cell division through the inhibition of FtsZ GTPase activity, therefore promoting FtsZ assembly into bundles of protofilaments necessary for the formation of the division Z ring. It is recruited early at mid-cell but it is not essential for cell division. In Cronobacter sakazakii (strain ATCC BAA-894) (Enterobacter sakazakii), this protein is Cell division protein ZapA.